We begin with the raw amino-acid sequence, 221 residues long: Interleukin-12 subunit alpha (221 aa).

An N-terminal signal peptide occupies residues 1 to 25 (MCPLRSLLLISTLVLLHHLPHLSLG). 3 disulfide bridges follow: Cys-39–Cys-112, Cys-66–Cys-198, and Cys-87–Cys-125. Residue Asn-95 is glycosylated (N-linked (GlcNAc...) asparagine).

The protein belongs to the IL-6 superfamily. As to quaternary structure, heterodimer with IL12B; disulfide-linked. This heterodimer is known as interleukin IL-12. Heterodimer with EBI3/IL27B; not disulfide-linked. This heterodimer is known as interleukin IL-35. Interacts with NBR1; this interaction promotes IL-12 secretion.

Its subcellular location is the secreted. In terms of biological role, heterodimerizes with IL12B to form the IL-12 cytokine or with EBI3/IL27B to form the IL-35 cytokine. IL-12 is primarily produced by professional antigen-presenting cells (APCs) such as B-cells and dendritic cells (DCs) as well as macrophages and granulocytes and regulates T-cell and natural killer-cell responses, induces the production of interferon-gamma (IFN-gamma), favors the differentiation of T-helper 1 (Th1) cells and is an important link between innate resistance and adaptive immunity. Mechanistically, exerts its biological effects through a receptor composed of IL12R1 and IL12R2 subunits. Binding to the receptor results in the rapid tyrosine phosphorylation of a number of cellular substrates including the JAK family kinases TYK2 and JAK2. In turn, recruited STAT4 gets phosphorylated and translocates to the nucleus where it regulates cytokine/growth factor responsive genes. As part of IL-35, plays essential roles in maintaining the immune homeostasis of the liver microenvironment and also functions as an immune-suppressive cytokine. Mediates biological events through unconventional receptors composed of IL12RB2 and gp130/IL6ST heterodimers or homodimers. Signaling requires the transcription factors STAT1 and STAT4, which form a unique heterodimer that binds to distinct DNA sites. The chain is Interleukin-12 subunit alpha (IL12A) from Ovis aries (Sheep).